Reading from the N-terminus, the 376-residue chain is Germination-specific cysteine protease 1 (376 aa).

The first 22 residues, 1–22 (MAPSTKVLSLLLLYVVVSLASG), serve as a signal peptide directing secretion. A propeptide spans 23–144 (DESIINDHLQ…KYSAAVNGKE (122 aa)) (activation peptide). Asparagine 93 carries N-linked (GlcNAc...) asparagine glycosylation. 3 disulfides stabilise this stretch: cysteine 166–cysteine 208, cysteine 200–cysteine 241, and cysteine 299–cysteine 351. Residue cysteine 169 is part of the active site. Active-site residues include histidine 305 and asparagine 325.

It belongs to the peptidase C1 family.

Functionally, probable thiol protease. The protein is Germination-specific cysteine protease 1 of Arabidopsis thaliana (Mouse-ear cress).